A 129-amino-acid chain; its full sequence is L5 homolog (129 aa).

A helical; Signal-anchor for type III membrane protein transmembrane segment spans residues 27–47; that stretch reads YFYILVFEVIVALIILNFFFK. C76 and C106 are joined by a disulfide.

It belongs to the chordopoxvirinae L5 family. In terms of assembly, part of a stable entry-fusion complex (EFC) which is at least composed of proteins A16, A21, A28, G3, G9, H2, J5, and L5. Formation of the viral membrane is necessary for the assembly of the complex. Interacts with G3. Most cysteines are linked by disulfide bonds. They are created by the viral disulfide bond formation pathway, a poxvirus-specific redox pathway that operates on the cytoplasmic side of the MV membranes.

The protein localises to the virion membrane. In terms of biological role, envelope protein part of the entry-fusion complex responsible for the virus membrane fusion with host cell membrane during virus entry. Also plays a role in cell-cell fusion (syncytium formation). This chain is L5 homolog, found in Fowlpox virus (strain NVSL) (FPV).